The following is a 228-amino-acid chain: Cytochrome c oxidase subunit 2 (228 aa).

The Mitochondrial intermembrane portion of the chain corresponds to 1–14; sequence MPHASQLSLQEAMG. The chain crosses the membrane as a helical span at residues 15-45; sequence PTMEEVIFLHDHVLLLTCLMTMVITMFTLTA. The Mitochondrial matrix portion of the chain corresponds to 46-59; it reads TTTALTHNDPTEEV. The chain crosses the membrane as a helical span at residues 60 to 87; that stretch reads EQLEAAWTVAPIMILILTALPSVRSLYL. At 88 to 228 the chain is on the mitochondrial intermembrane side; sequence MEEVFNPYLT…HFEQWLISEQ (141 aa). Cu cation-binding residues include His162, Cys197, Glu199, Cys201, His205, and Met208. Position 199 (Glu199) interacts with Mg(2+).

It belongs to the cytochrome c oxidase subunit 2 family. In terms of assembly, component of the cytochrome c oxidase (complex IV, CIV), a multisubunit enzyme composed of 14 subunits. The complex is composed of a catalytic core of 3 subunits MT-CO1, MT-CO2 and MT-CO3, encoded in the mitochondrial DNA, and 11 supernumerary subunits COX4I, COX5A, COX5B, COX6A, COX6B, COX6C, COX7A, COX7B, COX7C, COX8 and NDUFA4, which are encoded in the nuclear genome. The complex exists as a monomer or a dimer and forms supercomplexes (SCs) in the inner mitochondrial membrane with NADH-ubiquinone oxidoreductase (complex I, CI) and ubiquinol-cytochrome c oxidoreductase (cytochrome b-c1 complex, complex III, CIII), resulting in different assemblies (supercomplex SCI(1)III(2)IV(1) and megacomplex MCI(2)III(2)IV(2)). Found in a complex with TMEM177, COA6, COX18, COX20, SCO1 and SCO2. Interacts with TMEM177 in a COX20-dependent manner. Interacts with COX20. Interacts with COX16. Requires Cu cation as cofactor.

The protein resides in the mitochondrion inner membrane. The catalysed reaction is 4 Fe(II)-[cytochrome c] + O2 + 8 H(+)(in) = 4 Fe(III)-[cytochrome c] + 2 H2O + 4 H(+)(out). Functionally, component of the cytochrome c oxidase, the last enzyme in the mitochondrial electron transport chain which drives oxidative phosphorylation. The respiratory chain contains 3 multisubunit complexes succinate dehydrogenase (complex II, CII), ubiquinol-cytochrome c oxidoreductase (cytochrome b-c1 complex, complex III, CIII) and cytochrome c oxidase (complex IV, CIV), that cooperate to transfer electrons derived from NADH and succinate to molecular oxygen, creating an electrochemical gradient over the inner membrane that drives transmembrane transport and the ATP synthase. Cytochrome c oxidase is the component of the respiratory chain that catalyzes the reduction of oxygen to water. Electrons originating from reduced cytochrome c in the intermembrane space (IMS) are transferred via the dinuclear copper A center (CU(A)) of subunit 2 and heme A of subunit 1 to the active site in subunit 1, a binuclear center (BNC) formed by heme A3 and copper B (CU(B)). The BNC reduces molecular oxygen to 2 water molecules using 4 electrons from cytochrome c in the IMS and 4 protons from the mitochondrial matrix. In Lycodon semicarinatus (Ryukyu odd-tooth snake), this protein is Cytochrome c oxidase subunit 2 (MT-CO2).